The primary structure comprises 434 residues: Glutamate-1-semialdehyde 2,1-aminomutase 2 (434 aa).

Lysine 269 carries the N6-(pyridoxal phosphate)lysine modification.

Belongs to the class-III pyridoxal-phosphate-dependent aminotransferase family. HemL subfamily. As to quaternary structure, homodimer. Pyridoxal 5'-phosphate serves as cofactor.

It localises to the cytoplasm. It catalyses the reaction (S)-4-amino-5-oxopentanoate = 5-aminolevulinate. Its pathway is porphyrin-containing compound metabolism; protoporphyrin-IX biosynthesis; 5-aminolevulinate from L-glutamyl-tRNA(Glu): step 2/2. This is Glutamate-1-semialdehyde 2,1-aminomutase 2 from Exiguobacterium sp. (strain ATCC BAA-1283 / AT1b).